The chain runs to 118 residues: Ribosome-binding factor A (118 aa).

The protein belongs to the RbfA family. In terms of assembly, monomer. Binds 30S ribosomal subunits, but not 50S ribosomal subunits or 70S ribosomes.

It localises to the cytoplasm. Its function is as follows. One of several proteins that assist in the late maturation steps of the functional core of the 30S ribosomal subunit. Associates with free 30S ribosomal subunits (but not with 30S subunits that are part of 70S ribosomes or polysomes). Required for efficient processing of 16S rRNA. May interact with the 5'-terminal helix region of 16S rRNA. This Geobacter sulfurreducens (strain ATCC 51573 / DSM 12127 / PCA) protein is Ribosome-binding factor A.